The sequence spans 208 residues: TM2 domain-containing protein 1 (208 aa).

An N-terminal signal peptide occupies residues 1–37; sequence MAAAWPAGRASPAAGPPGLLRTLWLVTVAAGHCGAAA. The Extracellular segment spans residues 38–129; it reads SGAVGGEETP…YSYKVAVALS (92 aa). 3 N-linked (GlcNAc...) asparagine glycosylation sites follow: Asn-73, Asn-76, and Asn-97. Positions 119 to 167 constitute a TM2 domain; that stretch reads GYSYKVAVALSLFLGWLGADRFYLGYPALGLLKFCTVGFCGIGSLIDFI. A helical transmembrane segment spans residues 130–150; that stretch reads LFLGWLGADRFYLGYPALGLL. The Cytoplasmic portion of the chain corresponds to 151–154; the sequence is KFCT. A helical transmembrane segment spans residues 155–175; that stretch reads VGFCGIGSLIDFILISMQIVG. Over 176–208 the chain is Extracellular; that stretch reads PSDGSSYIIDYYGTRLTRLSITNETFRKTQLYP. Asn-198 carries an N-linked (GlcNAc...) asparagine glycan.

It belongs to the TM2 family. In terms of assembly, interacts with APP beta-APP42 (amyloid-beta protein 42). In terms of processing, N-glycosylated.

The protein resides in the membrane. May participate in amyloid-beta-induced apoptosis via its interaction with beta-APP42. The sequence is that of TM2 domain-containing protein 1 (Tm2d1) from Mus musculus (Mouse).